We begin with the raw amino-acid sequence, 96 residues long: Co-chaperonin GroES (96 aa).

Belongs to the GroES chaperonin family. Heptamer of 7 subunits arranged in a ring. Interacts with the chaperonin GroEL.

It is found in the cytoplasm. Functionally, together with the chaperonin GroEL, plays an essential role in assisting protein folding. The GroEL-GroES system forms a nano-cage that allows encapsulation of the non-native substrate proteins and provides a physical environment optimized to promote and accelerate protein folding. GroES binds to the apical surface of the GroEL ring, thereby capping the opening of the GroEL channel. The polypeptide is Co-chaperonin GroES (Tremblaya princeps).